The primary structure comprises 367 residues: Ribosomal RNA large subunit methyltransferase M (367 aa).

S-adenosyl-L-methionine-binding positions include Ser-189, 222-225 (CPGG), Asp-241, Asp-261, and Asp-278. The active-site Proton acceptor is Lys-307.

This sequence belongs to the class I-like SAM-binding methyltransferase superfamily. RNA methyltransferase RlmE family. RlmM subfamily. In terms of assembly, monomer.

It localises to the cytoplasm. It carries out the reaction cytidine(2498) in 23S rRNA + S-adenosyl-L-methionine = 2'-O-methylcytidine(2498) in 23S rRNA + S-adenosyl-L-homocysteine + H(+). Functionally, catalyzes the 2'-O-methylation at nucleotide C2498 in 23S rRNA. This chain is Ribosomal RNA large subunit methyltransferase M, found in Shewanella denitrificans (strain OS217 / ATCC BAA-1090 / DSM 15013).